The following is a 370-amino-acid chain: MTLPPSLRSVEVDGAQPYTISIAPGLLADGARLARHVRGRHVLLLSDTQVAPHYAAGVRAALLQARPDLQLGELVIAAGEASKTLDNFSLAITALAELGATRDACVFALGGGVVGDLAGFAAACWMRGVDCVQLPTSLLAMVDSSVGGKTAVDIPQGKNLVGAFHPPRAVIADTDTLRTLPTRELRAGLAEVIKYGAIGDPLFFQWLHAERRALLDGDPAALAQAIARSCEHKADIVARDPLEKGERALLNLGHTFGHAIETEQGYGAPGNDNLNHGEAVAVGMVLAARLSAALGMADAQDTEALRTLLHEFGLPTQIPTGLAPEALLGRMRLDKKNIAGRLRLVLWRGIGKAEVVPDVDEAAVLEILAD.

NAD(+)-binding positions include glycine 112–aspartate 116, threonine 136–serine 137, lysine 149, lysine 158, and threonine 176–threonine 179. Zn(2+)-binding residues include glutamate 191, histidine 254, and histidine 276.

The protein belongs to the sugar phosphate cyclases superfamily. Dehydroquinate synthase family. Co(2+) is required as a cofactor. Requires Zn(2+) as cofactor. NAD(+) serves as cofactor.

The protein localises to the cytoplasm. The enzyme catalyses 7-phospho-2-dehydro-3-deoxy-D-arabino-heptonate = 3-dehydroquinate + phosphate. It participates in metabolic intermediate biosynthesis; chorismate biosynthesis; chorismate from D-erythrose 4-phosphate and phosphoenolpyruvate: step 2/7. Functionally, catalyzes the conversion of 3-deoxy-D-arabino-heptulosonate 7-phosphate (DAHP) to dehydroquinate (DHQ). This is 3-dehydroquinate synthase from Xanthomonas campestris pv. campestris (strain 8004).